The sequence spans 578 residues: Transcriptional regulator SKO1 (578 aa).

Positions 39 to 50 are enriched in polar residues; the sequence is NDAISDVNSVAT. Disordered stretches follow at residues 39-169, 176-195, 287-311, and 342-489; these read NDAI…TQQP, MSGM…RSGL, LQQD…QPQP, and ESKP…RKNF. The span at 51-62 shows a compositional bias: low complexity; the sequence is SGSSINNGSSSN. Polar residues-rich tracts occupy residues 70–80 and 107–132; these read NISSVNQQQGV and GGTT…TLGS. The segment covering 154-169 has biased composition (low complexity); it reads PQQQQQPQQQQQTQQP. Over residues 184 to 193 the composition is skewed to polar residues; sequence LTPNESNIRS. Composition is skewed to low complexity over residues 287–296 and 356–370; these read LQQDQSSQAL and DLNP…TTTA. The segment covering 384 to 402 has biased composition (basic residues); that stretch reads KKAKVAKGKKKEPKSKSKG. The segment covering 415–443 has biased composition (basic and acidic residues); it reads KPEDENVPGKENGNEENHKVEAESKEEHL. Positions 445-471 are enriched in low complexity; it reads NGNETTTTKTNNTGNSSNGTTTTTTTK. The bZIP domain maps to 483-546; it reads DDKRKNFLER…LLLKEKHNIQ (64 aa). The interval 485-505 is basic motif; the sequence is KRKNFLERNRVAASKCRQRKK. The leucine-zipper stretch occupies residues 508 to 515; that stretch reads IQKMEEEL.

Belongs to the bZIP family. Post-translationally, undergoes HOG1-dependent phosphorylation after osmotic stress.

The protein localises to the nucleus. Its function is as follows. Transcription repressor involved in cell wall damage response. Regulates 79 caspofungin-responsive genes, including several cell wall biogenesis genes such as CRH11, MNN2, and SKN1. Also controls the expression of pathogenesis and hyphal related genes and represses the yeast-to-hypha transition. Mediates the response to oxidative stress. This Candida albicans (strain SC5314 / ATCC MYA-2876) (Yeast) protein is Transcriptional regulator SKO1 (SKO1).